We begin with the raw amino-acid sequence, 35 residues long: Small toxic polypeptide LdrA (35 aa).

A helical membrane pass occupies residues 8-28 (MIFWHDLAAPILAGIITAAIV).

The protein belongs to the Ldr toxic peptide family.

The protein resides in the cell inner membrane. Functionally, toxic component of a type I toxin-antitoxin (TA) system. Inhibits ATP synthesis possibly due to its insertion in the cell inner membrane, ATP levels drop over 50% 2 minutes after induction. Overexpression is toxic leading to cell death, it inhibits cell growth within 30 minutes; C-terminally tagged versions of the protein are toxic while N-terminally tagged versions are not. This is Small toxic polypeptide LdrA (ldrA) from Escherichia coli (strain K12).